A 142-amino-acid chain; its full sequence is COA8 family protein CBG23705, mitochondrial (142 aa).

It belongs to the COA8 family.

The protein localises to the mitochondrion inner membrane. Its function is as follows. May be required for cytochrome c complex (COX) assembly and function, COX being the terminal component of the mitochondrial respiratory chain. The polypeptide is COA8 family protein CBG23705, mitochondrial (Caenorhabditis briggsae).